Here is an 87-residue protein sequence, read N- to C-terminus: Small ribosomal subunit protein bS20 (87 aa).

Residues 1–26 form a disordered region; sequence MANIKSAKKRAIQSEKARKHNASRRS.

The protein belongs to the bacterial ribosomal protein bS20 family.

Functionally, binds directly to 16S ribosomal RNA. In Escherichia coli O17:K52:H18 (strain UMN026 / ExPEC), this protein is Small ribosomal subunit protein bS20.